The primary structure comprises 317 residues: Inositol oxygenase 4 (317 aa).

Substrate-binding positions include R58 and 115 to 117; that span reads DES. Residues H128, H153, and D154 each coordinate Fe cation. Residues K157 and 174–175 each bind substrate; that span reads GD. Fe cation-binding residues include H226, H252, and D285. Residue 252-253 participates in substrate binding; that stretch reads HS.

The protein belongs to the myo-inositol oxygenase family. It depends on Fe cation as a cofactor. As to expression, expressed in flowers, leaves, siliques, and to a lesser extent in roots.

It localises to the cytoplasm. It catalyses the reaction myo-inositol + O2 = D-glucuronate + H2O + H(+). It participates in polyol metabolism; myo-inositol degradation into D-glucuronate; D-glucuronate from myo-inositol: step 1/1. Functionally, catalyzes the oxygenative cleavage of myo-inositol to D-glucuronate. Involved in the biosynthesis of UDP-glucuronic acid (UDP-GlcA), providing nucleotide sugars for cell-wall polymers. May be also involved in plant ascorbate biosynthesis. The protein is Inositol oxygenase 4 (MIOX4) of Arabidopsis thaliana (Mouse-ear cress).